Reading from the N-terminus, the 176-residue chain is Ubiquitin-conjugating enzyme E2-20 kDa (176 aa).

Polar residues predominate over residues 1–20 (MDSDMQNQNPHTNSKNSSSA). Residues 1 to 25 (MDSDMQNQNPHTNSKNSSSAGMAVD) form a disordered region. The UBC core domain maps to 28–175 (SVTKRLRSEL…LMQRYKEIDE (148 aa)). Residue Cys-113 is the Glycyl thioester intermediate of the active site.

This sequence belongs to the ubiquitin-conjugating enzyme family.

It carries out the reaction S-ubiquitinyl-[E1 ubiquitin-activating enzyme]-L-cysteine + [E2 ubiquitin-conjugating enzyme]-L-cysteine = [E1 ubiquitin-activating enzyme]-L-cysteine + S-ubiquitinyl-[E2 ubiquitin-conjugating enzyme]-L-cysteine.. It functions in the pathway protein modification; protein ubiquitination. In terms of biological role, catalyzes the covalent attachment of ubiquitin to other proteins. The protein is Ubiquitin-conjugating enzyme E2-20 kDa (ubc11) of Schizosaccharomyces pombe (strain 972 / ATCC 24843) (Fission yeast).